The sequence spans 254 residues: Type III pantothenate kinase (254 aa).

6–13 serves as a coordination point for ATP; the sequence is DVGNTNIV. Substrate contacts are provided by residues Phe100 and 107–110; that span reads GADR. The active-site Proton acceptor is the Asp109. Asp129 lines the K(+) pocket. Thr132 lines the ATP pocket. A substrate-binding site is contributed by Thr184.

It belongs to the type III pantothenate kinase family. As to quaternary structure, homodimer. NH4(+) serves as cofactor. Requires K(+) as cofactor.

The protein resides in the cytoplasm. It catalyses the reaction (R)-pantothenate + ATP = (R)-4'-phosphopantothenate + ADP + H(+). It participates in cofactor biosynthesis; coenzyme A biosynthesis; CoA from (R)-pantothenate: step 1/5. In terms of biological role, catalyzes the phosphorylation of pantothenate (Pan), the first step in CoA biosynthesis. The chain is Type III pantothenate kinase from Moorella thermoacetica (strain ATCC 39073 / JCM 9320).